The chain runs to 105 residues: Putative membrane protein insertion efficiency factor (105 aa).

A disordered region spans residues 76-105; sequence GHPGGVDPVPPGPHETPRKTSTHDDEPPSR. Residues 90-105 are compositionally biased toward basic and acidic residues; sequence ETPRKTSTHDDEPPSR.

Belongs to the UPF0161 family.

Its subcellular location is the cell inner membrane. Its function is as follows. Could be involved in insertion of integral membrane proteins into the membrane. The polypeptide is Putative membrane protein insertion efficiency factor (Chromohalobacter salexigens (strain ATCC BAA-138 / DSM 3043 / CIP 106854 / NCIMB 13768 / 1H11)).